Reading from the N-terminus, the 508-residue chain is Aldehyde dehydrogenase family 7 member B4 (508 aa).

An NAD(+)-binding site is contributed by 244 to 249 (GSSRVG). Glu-266 (proton acceptor) is an active-site residue. The active-site Nucleophile is Cys-300.

It belongs to the aldehyde dehydrogenase family. Homotetramer.

The enzyme catalyses an aldehyde + NAD(+) + H2O = a carboxylate + NADH + 2 H(+). This Arabidopsis thaliana (Mouse-ear cress) protein is Aldehyde dehydrogenase family 7 member B4 (ALDH7B4).